An 876-amino-acid chain; its full sequence is Alanine--tRNA ligase (876 aa).

At Lys-74 the chain carries N6-acetyllysine. Residues His-564, His-568, Cys-666, and His-670 each contribute to the Zn(2+) site.

The protein belongs to the class-II aminoacyl-tRNA synthetase family. Homotetramer. Zn(2+) serves as cofactor.

Its subcellular location is the cytoplasm. It carries out the reaction tRNA(Ala) + L-alanine + ATP = L-alanyl-tRNA(Ala) + AMP + diphosphate. Functionally, catalyzes the attachment of alanine to tRNA(Ala) in a two-step reaction: alanine is first activated by ATP to form Ala-AMP and then transferred to the acceptor end of tRNA(Ala). Also edits incorrectly charged Ser-tRNA(Ala) and Gly-tRNA(Ala) via its editing domain. This is Alanine--tRNA ligase from Escherichia coli (strain SMS-3-5 / SECEC).